The chain runs to 609 residues: Protein FRIGIDA (609 aa).

Over residues 1–18 the composition is skewed to low complexity; that stretch reads MSNYPPTVAAQPTTTANP. The interval 1 to 31 is disordered; the sequence is MSNYPPTVAAQPTTTANPLLQRHQSEQRRRE. 2 coiled-coil regions span residues 60 to 97 and 409 to 440; these read DELA…LESN and QIKE…LMEE. Disordered regions lie at residues 454 to 488 and 587 to 609; these read RPRL…DDQD and SEER…LDPK. Residues 474-484 are compositionally biased toward basic and acidic residues; that stretch reads YRDRSFPSQRD. Residues 594-609 are compositionally biased toward polar residues; sequence LSNQRSPRSNSSLDPK.

Belongs to the Frigida family. Homodimer. Component of the transcription activator complex FRI-C composed of FRI, FRL1, SUF4, FLX and FES1. Interacts (via N-terminus) with FRL1 and (via C-terminus) with FLX (via N-terminus), SUF4 (via C-terminus) and FES1 (via C-terminus). Interacts with ASHH2 and RIN1, a component of the SWR1 chromatin-remodeling complex. Interacts with CBP20, FIP1 and FIP2. In terms of tissue distribution, expressed in ovules, but not in stamens.

Its subcellular location is the nucleus speckle. In terms of biological role, required for the regulation of flowering time in the late-flowering phenotype. Involved in the enrichment of a WDR5A-containing COMPASS-like complex at the 'FLOWERING LOCUS C' that trimethylates histone H3 'Lys-4', leading to FLC up-regulation and RNA levels increase. Variants with an early-flowering phenotype (Including cv. Columbia, cv. Landsberg Erecta and cv. Wassilewskija) show loss-of-function mutations of FRI. Able to delay flowering independently of FRL1 activity. Dispensable for the reactivation of FLC in early embryogenesis, but required to maintain high levels of FLC expression in later embryonic and vegetative development. Suppresses the repression of FLC by the autonomous pathway, but has no effect on the expression of the genes involved in this pathway. The protein is Protein FRIGIDA of Arabidopsis thaliana (Mouse-ear cress).